Consider the following 156-residue polypeptide: MSDRKPVRGRHQARKRAVDLLFEAEVRGISAAEVVDTRAALAEAKPDIARLHPYTAAVARGVSEHAAHIDDLITAHLRGWTLDRLPAVDRAILRVSVWELLHAADVPEPVVVDEAVQLAKELSTDDSPGFVNGVLGQVMLVTPQLRAAAQAVRGGA.

The protein belongs to the NusB family.

In terms of biological role, involved in transcription antitermination. Required for transcription of ribosomal RNA (rRNA) genes. Binds specifically to the boxA antiterminator sequence of the ribosomal RNA (rrn) operons. The chain is Transcription antitermination protein NusB from Mycobacterium bovis (strain ATCC BAA-935 / AF2122/97).